Reading from the N-terminus, the 298-residue chain is N-acetylmuramic acid 6-phosphate etherase (298 aa).

An SIS domain is found at 55-218 (AANRYKKGGR…STGVMIRQGK (164 aa)). The Proton donor role is filled by Glu-83. Glu-114 is an active-site residue.

Belongs to the GCKR-like family. MurNAc-6-P etherase subfamily. In terms of assembly, homodimer.

The enzyme catalyses N-acetyl-D-muramate 6-phosphate + H2O = N-acetyl-D-glucosamine 6-phosphate + (R)-lactate. It participates in amino-sugar metabolism; N-acetylmuramate degradation. Its function is as follows. Specifically catalyzes the cleavage of the D-lactyl ether substituent of MurNAc 6-phosphate, producing GlcNAc 6-phosphate and D-lactate. In Lactobacillus acidophilus (strain ATCC 700396 / NCK56 / N2 / NCFM), this protein is N-acetylmuramic acid 6-phosphate etherase.